The following is a 538-amino-acid chain: Mitochondria-eating protein (538 aa).

The tract at residues 1 to 273 is interaction with YWHAG/14-3-3 protein gamma; that stretch reads MAENLKRLVS…PRSRSCSRSR (273 aa). At Ser-85 the chain carries Phosphoserine. The tract at residues 92–137 is disordered; sequence GKPVDSKVPSLQNTFDRERRKDPSPRDRDMQQLDSNLNSTRSQLNQ. Residues 106-122 are compositionally biased toward basic and acidic residues; the sequence is FDRERRKDPSPRDRDMQ. 2 coiled-coil regions span residues 118–186 and 220–256; these read DRDM…ARHR and QRDT…RSSR. The span at 123-137 shows a compositional bias: polar residues; it reads QLDSNLNSTRSQLNQ. Phosphoserine occurs at positions 156 and 159. Disordered stretches follow at residues 174–227 and 247–292; these read LKTL…EVTS and KSAL…NRSK. Basic and acidic residues-rich tracts occupy residues 181–209 and 216–227; these read EDAR…RRCE and RNADQRDTEVTS. Residues 253 to 278 show a composition bias toward low complexity; the sequence is RSSRSRSPSPAPRSRSCSRSRSASPS. Phosphoserine is present on residues Ser-285, Ser-287, and Ser-509.

The protein belongs to the MIEAP family. As to quaternary structure, interacts (via coiled-coil domains) with BNIP3L (via BH3 domain). Interacts (via coiled-coil domains) with BNIP3 (via BH3 domain). Interacts with YWHAG/14-3-3 protein gamma; a protein that also plays a role in MALM.

Its subcellular location is the cytoplasm. It is found in the cytosol. The protein resides in the mitochondrion outer membrane. The protein localises to the mitochondrion matrix. In terms of biological role, key regulator of mitochondrial quality that mediates the repairing or degradation of unhealthy mitochondria in response to mitochondrial damage. Mediator of mitochondrial protein catabolic process (also named MALM) by mediating the degradation of damaged proteins inside mitochondria by promoting the accumulation in the mitochondrial matrix of hydrolases that are characteristic of the lysosomal lumen. Also involved in mitochondrion degradation of damaged mitochondria by promoting the formation of vacuole-like structures (named MIV), which engulf and degrade unhealthy mitochondria by accumulating lysosomes. The physical interaction of SPATA18/MIEAP, BNIP3 and BNIP3L/NIX at the mitochondrial outer membrane regulates the opening of a pore in the mitochondrial double membrane in order to mediate the translocation of lysosomal proteins from the cytoplasm to the mitochondrial matrix. Binds cardiolipin. May form molecular condensates (non-membrane-bounded organelles) within mitochondria that compartmentalize and promote cardiolipin metabolism. The chain is Mitochondria-eating protein (SPATA18) from Macaca fascicularis (Crab-eating macaque).